A 438-amino-acid chain; its full sequence is Gamma-glutamyl phosphate reductase (438 aa).

The segment at Met1–Glu21 is disordered. The span at Thr10–Glu21 shows a compositional bias: basic and acidic residues.

Belongs to the gamma-glutamyl phosphate reductase family.

Its subcellular location is the cytoplasm. It catalyses the reaction L-glutamate 5-semialdehyde + phosphate + NADP(+) = L-glutamyl 5-phosphate + NADPH + H(+). It functions in the pathway amino-acid biosynthesis; L-proline biosynthesis; L-glutamate 5-semialdehyde from L-glutamate: step 2/2. Its function is as follows. Catalyzes the NADPH-dependent reduction of L-glutamate 5-phosphate into L-glutamate 5-semialdehyde and phosphate. The product spontaneously undergoes cyclization to form 1-pyrroline-5-carboxylate. This is Gamma-glutamyl phosphate reductase from Corynebacterium efficiens (strain DSM 44549 / YS-314 / AJ 12310 / JCM 11189 / NBRC 100395).